A 231-amino-acid chain; its full sequence is Protein HHL1, chloroplastic (231 aa).

The transit peptide at Met-1–Arg-39 directs the protein to the chloroplast. A helical membrane pass occupies residues Tyr-93–Ala-113. A disordered region spans residues Ser-206 to Ala-231. Over residues Ser-217 to Ala-231 the composition is skewed to basic and acidic residues.

Interacts with psbB, psbC and LQY1, but not with psbA or psbD.

The protein resides in the plastid. The protein localises to the chloroplast thylakoid membrane. Involved in photoprotection. Forms a complex with LQY1 that is involved in the repair and reassembly cycle of the PSII-LHCII supercomplex under high-light conditions. May function in guiding the release of psbC from PSII core monomers. This Arabidopsis thaliana (Mouse-ear cress) protein is Protein HHL1, chloroplastic.